The primary structure comprises 411 residues: MDGLPGRALGAACLLLLAAGWLGPEAWGSPTPPPSPAAPPPPPPPGAPGGSQDTCTSCGGGGGGFRRPEELGRVDGDFLEAVKRHILSRLQLRGRPNITHAVPKAAMVTALRKLHAGKVREDGRVEIPHLDGHASPGADGQERVSEIISFAETDGLASSRVRLYFFVSNEGNQNLFVVQASLWLYLKLLPYVLEKGSRRKVRVKVYFQEQGHGDRWNVVEKKVDLKRSGWHTFPITEAIQALFERGERRLNLDVQCDSCQELAVVPVFVDPGEESHRPFVVVQARLGDSRHRIRKRGLECDGRTSLCCRQQFFIDFRLIGWNDWIIAPTGYYGNYCEGSCPAYLAGVPGSASSFHTAVVNQYRMRGLNPGPVNSCCIPTKLSSMSMLYFDDEYNIVKRDVPNMIVEECGCA.

The signal sequence occupies residues 1 to 28 (MDGLPGRALGAACLLLLAAGWLGPEAWG). The disordered stretch occupies residues 27–69 (WGSPTPPPSPAAPPPPPPPGAPGGSQDTCTSCGGGGGGFRRPE). Residues 29 to 296 (SPTPPPSPAA…GDSRHRIRKR (268 aa)) constitute a propeptide that is removed on maturation. Over residues 30–47 (PTPPPSPAAPPPPPPPGA) the composition is skewed to pro residues. N-linked (GlcNAc...) asparagine glycosylation is present at asparagine 97. Cystine bridges form between cysteine 300–cysteine 308, cysteine 307–cysteine 376, cysteine 336–cysteine 408, and cysteine 340–cysteine 410.

Belongs to the TGF-beta family. As to quaternary structure, dimeric, linked by one or more disulfide bonds. Inhibin B is a dimer of alpha and beta-B. Activin B is a homodimer of beta-B. Activin AB is a dimer of beta-A and beta-B. Interacts with FST and FSTL3. Alpha- and beta-B subunits are the predominant forms found in rat testis. Also expressed in ovary.

It localises to the secreted. Inhibins and activins inhibit and activate, respectively, the secretion of follitropin by the pituitary gland. Inhibins/activins are involved in regulating a number of diverse functions such as hypothalamic and pituitary hormone secretion, gonadal hormone secretion, germ cell development and maturation, erythroid differentiation, insulin secretion, nerve cell survival, embryonic axial development or bone growth, depending on their subunit composition. Inhibins appear to oppose the functions of activins. Its function is as follows. Activin B is a dimer of alpha and beta-B that plays a role in several essential biological processes including embryonic development, stem cell maintenance and differentiation, haematopoiesis, cell proliferation and wound healing. Signals through type I receptor ACVR1C, abundantly expressed in pancreatic beta cells, and type II receptors like ACVR2A. Upon ligand binding, these receptors phosphorylate intracellular signaling mediators SMAD2 and SMAD3, which form a complex with SMAD4, translocate to the nucleus, and regulate gene expression. Plays a crucial role in the induction of hepcidin by inflammation through activation of ACVR1C and subsequent phosphorylation of SMAD1/5/8. Regulates adipocyte lipid metabolism by decreasing non-esterified fatty acids and glycerol release and increases intracellular triglyceride content. Stimulates wound healing by promoting cell migration and hair follicle regeneration through the JNK and ERK signaling pathways downstream of RHOA. In terms of biological role, inhibin B is a dimer of alpha and beta-B that plays a crucial role in the regulation of the reproductive system by inhibiting the secretion of follicle-stimulating hormone (FSH) from the anterior pituitary gland. Thereby, maintains reproductive homeostasis in both males and females. Acts as a more potent suppressor of FSH release than inhibin A. Functions as competitive receptor antagonist binding activin type II receptors with high affinity in the presence of the TGF-beta type III coreceptor/TGFBR3L. The chain is Inhibin beta B chain (Inhbb) from Rattus norvegicus (Rat).